We begin with the raw amino-acid sequence, 428 residues long: Cytochrome c biogenesis protein CcsB (428 aa).

3 helical membrane-spanning segments follow: residues 14–34 (LRFA…GTFI), 72–92 (SNWF…CSFR), and 162–182 (LGPI…AYGN).

This sequence belongs to the Ccs1/CcsB family. In terms of assembly, may interact with CcsA.

The protein resides in the cellular thylakoid membrane. Functionally, required during biogenesis of c-type cytochromes (cytochrome c6 and cytochrome f) at the step of heme attachment. The chain is Cytochrome c biogenesis protein CcsB from Prochlorococcus marinus subsp. pastoris (strain CCMP1986 / NIES-2087 / MED4).